Reading from the N-terminus, the 421-residue chain is 4-aminobutyrate aminotransferase PuuE (421 aa).

Pyridoxal 5'-phosphate is bound by residues 110-111 (GA) and 238-241 (DEVQ). K267 is modified (N6-(pyridoxal phosphate)lysine). T296 is a pyridoxal 5'-phosphate binding site.

This sequence belongs to the class-III pyridoxal-phosphate-dependent aminotransferase family. Requires pyridoxal 5'-phosphate as cofactor.

The catalysed reaction is 4-aminobutanoate + 2-oxoglutarate = succinate semialdehyde + L-glutamate. It functions in the pathway amine and polyamine degradation; putrescine degradation; succinate semialdehyde from 4-aminobutanoate. Completely inhibited by succinate and low-aeration conditions. In terms of biological role, catalyzes the transfer of the amino group from gamma-aminobutyrate (GABA) to alpha-ketoglutarate (KG) to yield succinic semialdehyde (SSA). PuuE is important for utilization of putrescine as the sole nitrogen or carbon source. In Escherichia coli (strain K12), this protein is 4-aminobutyrate aminotransferase PuuE (puuE).